The following is a 434-amino-acid chain: Nicotinate phosphoribosyltransferase (434 aa).

Position 242 is a phosphohistidine; by autocatalysis (H242).

This sequence belongs to the NAPRTase family. Transiently phosphorylated on a His residue during the reaction cycle. Phosphorylation strongly increases the affinity for substrates and increases the rate of nicotinate D-ribonucleotide production. Dephosphorylation regenerates the low-affinity form of the enzyme, leading to product release.

It catalyses the reaction nicotinate + 5-phospho-alpha-D-ribose 1-diphosphate + ATP + H2O = nicotinate beta-D-ribonucleotide + ADP + phosphate + diphosphate. The protein operates within cofactor biosynthesis; NAD(+) biosynthesis; nicotinate D-ribonucleotide from nicotinate: step 1/1. Catalyzes the synthesis of beta-nicotinate D-ribonucleotide from nicotinate and 5-phospho-D-ribose 1-phosphate at the expense of ATP. The sequence is that of Nicotinate phosphoribosyltransferase from Brucella abortus (strain S19).